We begin with the raw amino-acid sequence, 529 residues long: uncharacterized protein (529 aa).

An N-terminal signal peptide occupies residues 1–20; that stretch reads MYFLILILVLLLIMVAAATA.

This is an uncharacterized protein from Orgyia pseudotsugata multicapsid polyhedrosis virus (OpMNPV).